The primary structure comprises 439 residues: Indole-3-pyruvate monooxygenase YUCCA4 (439 aa).

An FAD-binding site is contributed by 49-54 (GAGPAG). 226–231 (GCGNSG) contributes to the NADP(+) binding site.

Belongs to the FMO family. The cofactor is FAD.

The catalysed reaction is indole-3-pyruvate + NADPH + O2 + H(+) = (indol-3-yl)acetate + CO2 + NADP(+) + H2O. Involved in auxin biosynthesis in anthers. This chain is Indole-3-pyruvate monooxygenase YUCCA4, found in Oryza sativa subsp. japonica (Rice).